Here is a 1262-residue protein sequence, read N- to C-terminus: DNA-directed RNA polymerase subunit beta' (1262 aa).

4 residues coordinate Zn(2+): Cys220, Cys294, Cys301, and Cys304.

The protein belongs to the RNA polymerase beta' chain family. RpoC2 subfamily. In cyanobacteria the RNAP catalytic core is composed of 2 alpha, 1 beta, 1 beta', 1 gamma and 1 omega subunit. When a sigma factor is associated with the core the holoenzyme is formed, which can initiate transcription. It depends on Zn(2+) as a cofactor.

It catalyses the reaction RNA(n) + a ribonucleoside 5'-triphosphate = RNA(n+1) + diphosphate. Its function is as follows. DNA-dependent RNA polymerase catalyzes the transcription of DNA into RNA using the four ribonucleoside triphosphates as substrates. The protein is DNA-directed RNA polymerase subunit beta' of Gloeobacter violaceus (strain ATCC 29082 / PCC 7421).